The following is a 29-amino-acid chain: Cytochrome b6-f complex subunit 8 (29 aa).

Residues 3–23 traverse the membrane as a helical segment; sequence IISIGWVSLMVVFTFSISLVV.

It belongs to the PetN family. The 4 large subunits of the cytochrome b6-f complex are cytochrome b6, subunit IV (17 kDa polypeptide, PetD), cytochrome f and the Rieske protein, while the 4 small subunits are PetG, PetL, PetM and PetN. The complex functions as a dimer.

The protein resides in the plastid. It localises to the chloroplast thylakoid membrane. In terms of biological role, component of the cytochrome b6-f complex, which mediates electron transfer between photosystem II (PSII) and photosystem I (PSI), cyclic electron flow around PSI, and state transitions. The protein is Cytochrome b6-f complex subunit 8 of Staurastrum punctulatum (Green alga).